The chain runs to 99 residues: MPDQIQIEVVYALPMRQTTLTLKINTGSSVEDAIRESGILARHPEIDLAVNKVGLFGRAVALSTRLERPTRIEIYRPLLADPKEIRRQRAEKAKLQSLK.

This sequence belongs to the UPF0125 (RnfH) family.

The polypeptide is Protein RnfH (Tolumonas auensis (strain DSM 9187 / NBRC 110442 / TA 4)).